The following is a 334-amino-acid chain: Glyceraldehyde-3-phosphate dehydrogenase (334 aa).

Residues 10-11, aspartate 33, lysine 77, and threonine 119 contribute to the NAD(+) site; that span reads RI. Residues 149–151, threonine 180, 209–210, and arginine 232 contribute to the D-glyceraldehyde 3-phosphate site; these read SCT and TG. Cysteine 150 functions as the Nucleophile in the catalytic mechanism. NAD(+) is bound at residue asparagine 314.

It belongs to the glyceraldehyde-3-phosphate dehydrogenase family. As to quaternary structure, homotetramer.

The protein resides in the cytoplasm. It carries out the reaction D-glyceraldehyde 3-phosphate + phosphate + NAD(+) = (2R)-3-phospho-glyceroyl phosphate + NADH + H(+). The protein operates within carbohydrate degradation; glycolysis; pyruvate from D-glyceraldehyde 3-phosphate: step 1/5. Functionally, catalyzes the oxidative phosphorylation of glyceraldehyde 3-phosphate (G3P) to 1,3-bisphosphoglycerate (BPG) using the cofactor NAD. The first reaction step involves the formation of a hemiacetal intermediate between G3P and a cysteine residue, and this hemiacetal intermediate is then oxidized to a thioester, with concomitant reduction of NAD to NADH. The reduced NADH is then exchanged with the second NAD, and the thioester is attacked by a nucleophilic inorganic phosphate to produce BPG. This Chlamydia trachomatis serovar L2 (strain ATCC VR-902B / DSM 19102 / 434/Bu) protein is Glyceraldehyde-3-phosphate dehydrogenase (gap).